The sequence spans 459 residues: DNA polymerase subunit gamma-2 (459 aa).

As to quaternary structure, heterotrimer composed of a catalytic subunit and a homodimer of accessory subunits (POLG:POLG2).

Its subcellular location is the mitochondrion. The protein resides in the mitochondrion matrix. It is found in the mitochondrion nucleoid. Functionally, accessory subunit of DNA polymerase gamma solely responsible for replication of mitochondrial DNA (mtDNA). Acts as an allosteric regulator of the holoenzyme activities. Enhances the polymerase activity and the processivity of POLG by increasing its interactions with the DNA template. Suppresses POLG exonucleolytic proofreading especially toward homopolymeric templates bearing mismatched termini. Binds to single-stranded DNA. This chain is DNA polymerase subunit gamma-2 (Polg2), found in Mus musculus (Mouse).